Reading from the N-terminus, the 310-residue chain is Aspartate carbamoyltransferase catalytic subunit (310 aa).

Positions 54 and 55 each coordinate carbamoyl phosphate. An L-aspartate-binding site is contributed by lysine 84. Carbamoyl phosphate-binding residues include arginine 105, histidine 134, and glutamine 137. L-aspartate contacts are provided by arginine 167 and arginine 229. The carbamoyl phosphate site is built by leucine 267 and proline 268.

The protein belongs to the aspartate/ornithine carbamoyltransferase superfamily. ATCase family. As to quaternary structure, heterododecamer (2C3:3R2) of six catalytic PyrB chains organized as two trimers (C3), and six regulatory PyrI chains organized as three dimers (R2).

It carries out the reaction carbamoyl phosphate + L-aspartate = N-carbamoyl-L-aspartate + phosphate + H(+). It functions in the pathway pyrimidine metabolism; UMP biosynthesis via de novo pathway; (S)-dihydroorotate from bicarbonate: step 2/3. Functionally, catalyzes the condensation of carbamoyl phosphate and aspartate to form carbamoyl aspartate and inorganic phosphate, the committed step in the de novo pyrimidine nucleotide biosynthesis pathway. The polypeptide is Aspartate carbamoyltransferase catalytic subunit (Enterobacter sp. (strain 638)).